A 296-amino-acid chain; its full sequence is Glycine--tRNA ligase alpha subunit (296 aa).

The protein belongs to the class-II aminoacyl-tRNA synthetase family. In terms of assembly, tetramer of two alpha and two beta subunits.

Its subcellular location is the cytoplasm. The catalysed reaction is tRNA(Gly) + glycine + ATP = glycyl-tRNA(Gly) + AMP + diphosphate. The sequence is that of Glycine--tRNA ligase alpha subunit from Parasynechococcus marenigrum (strain WH8102).